The following is a 62-amino-acid chain: Cytotoxin homolog (62 aa).

Cystine bridges form between Cys-3-Cys-22, Cys-15-Cys-40, Cys-44-Cys-55, and Cys-56-Cys-61.

It belongs to the three-finger toxin family. Short-chain subfamily. Orphan group XV sub-subfamily. As to expression, expressed by the venom gland.

The protein resides in the secreted. It localises to the target cell membrane. Has low cytotoxic activity. This is Cytotoxin homolog from Naja kaouthia (Monocled cobra).